We begin with the raw amino-acid sequence, 199 residues long: Rho-related protein racG (199 aa).

GTP contacts are provided by A13, G15, K16, T17, C18, Y32, and T35. Residue T17 participates in Mg(2+) binding. 2 short sequence motifs (switch) span residues 26–37 (NAFPNEYIPTVF) and 57–75 (DTAG…YPST). T35 is a Mg(2+) binding site. 3 residues coordinate GTP: K116, D118, and A159. C196 carries the cysteine methyl ester modification. Residue C196 is the site of S-geranylgeranyl cysteine attachment. Residues 197–199 (SLF) constitute a propeptide, removed in mature form.

Belongs to the small GTPase superfamily. Rho family. It depends on Mg(2+) as a cofactor.

The protein resides in the cell membrane. It is found in the cytoplasm. The protein localises to the cytoskeleton. The enzyme catalyses GTP + H2O = GDP + phosphate + H(+). Regulated by guanine nucleotide exchange factors (GEFs) which promote the exchange of bound GDP for free GTP, GTPase activating proteins (GAPs) which increase the GTP hydrolysis activity, and GDP dissociation inhibitors which inhibit the dissociation of the nucleotide from the GTPase. Small GTPase which cycles between active GTP-bound and inactive GDP-bound states. Involved in actin cytoskeleton remodeling during capping of surface receptors and uroid formation. The chain is Rho-related protein racG from Entamoeba histolytica (strain ATCC 30459 / HM-1:IMSS / ABRM).